We begin with the raw amino-acid sequence, 216 residues long: Probable GTP-binding protein EngB (216 aa).

Residues 30-204 (DGLEVAFAGR…HDVLARWLGL (175 aa)) form the EngB-type G domain. Residues 38 to 45 (GRSNAGKS), 64 to 68 (GRTQL), 82 to 85 (DLPG), 149 to 152 (TKAD), and 182 to 185 (LFSA) contribute to the GTP site. Ser-45 and Thr-66 together coordinate Mg(2+).

It belongs to the TRAFAC class TrmE-Era-EngA-EngB-Septin-like GTPase superfamily. EngB GTPase family. Mg(2+) serves as cofactor.

Functionally, necessary for normal cell division and for the maintenance of normal septation. The sequence is that of Probable GTP-binding protein EngB from Azotobacter vinelandii (strain DJ / ATCC BAA-1303).